Consider the following 420-residue polypeptide: Gamma-glutamyl phosphate reductase (420 aa).

The protein belongs to the gamma-glutamyl phosphate reductase family.

It is found in the cytoplasm. It carries out the reaction L-glutamate 5-semialdehyde + phosphate + NADP(+) = L-glutamyl 5-phosphate + NADPH + H(+). It functions in the pathway amino-acid biosynthesis; L-proline biosynthesis; L-glutamate 5-semialdehyde from L-glutamate: step 2/2. Its function is as follows. Catalyzes the NADPH-dependent reduction of L-glutamate 5-phosphate into L-glutamate 5-semialdehyde and phosphate. The product spontaneously undergoes cyclization to form 1-pyrroline-5-carboxylate. The sequence is that of Gamma-glutamyl phosphate reductase from Neisseria meningitidis serogroup C (strain 053442).